Reading from the N-terminus, the 157-residue chain is Small ribosomal subunit protein uS7 (157 aa).

It belongs to the universal ribosomal protein uS7 family. Part of the 30S ribosomal subunit. Contacts proteins S9 and S11.

Functionally, one of the primary rRNA binding proteins, it binds directly to 16S rRNA where it nucleates assembly of the head domain of the 30S subunit. Is located at the subunit interface close to the decoding center, probably blocks exit of the E-site tRNA. The protein is Small ribosomal subunit protein uS7 of Herpetosiphon aurantiacus (strain ATCC 23779 / DSM 785 / 114-95).